A 332-amino-acid polypeptide reads, in one-letter code: Ribosomal RNA small subunit methyltransferase H (332 aa).

S-adenosyl-L-methionine contacts are provided by residues 36–38 (GGY), Asp-54, Phe-81, Asp-102, and Gln-109. A disordered region spans residues 295–322 (PRARSAKLRGAERTESPAHAAGDLPGWP).

This sequence belongs to the methyltransferase superfamily. RsmH family.

The protein resides in the cytoplasm. It catalyses the reaction cytidine(1402) in 16S rRNA + S-adenosyl-L-methionine = N(4)-methylcytidine(1402) in 16S rRNA + S-adenosyl-L-homocysteine + H(+). Specifically methylates the N4 position of cytidine in position 1402 (C1402) of 16S rRNA. The sequence is that of Ribosomal RNA small subunit methyltransferase H from Rhodopseudomonas palustris (strain ATCC BAA-98 / CGA009).